Reading from the N-terminus, the 248-residue chain is 2,3-bisphosphoglycerate-dependent phosphoglycerate mutase (248 aa).

Substrate contacts are provided by residues 10–17 (RHGQSEWN), 23–24 (TG), Arg-62, 89–92 (ERHY), Lys-100, 116–117 (RR), and 183–184 (GN). His-11 serves as the catalytic Tele-phosphohistidine intermediate. Glu-89 serves as the catalytic Proton donor/acceptor.

It belongs to the phosphoglycerate mutase family. BPG-dependent PGAM subfamily.

It catalyses the reaction (2R)-2-phosphoglycerate = (2R)-3-phosphoglycerate. The protein operates within carbohydrate degradation; glycolysis; pyruvate from D-glyceraldehyde 3-phosphate: step 3/5. Functionally, catalyzes the interconversion of 2-phosphoglycerate and 3-phosphoglycerate. In Corynebacterium diphtheriae (strain ATCC 700971 / NCTC 13129 / Biotype gravis), this protein is 2,3-bisphosphoglycerate-dependent phosphoglycerate mutase.